Consider the following 222-residue polypeptide: Methylthioribulose-1-phosphate dehydratase (222 aa).

H94 and H96 together coordinate Zn(2+).

It belongs to the aldolase class II family. MtnB subfamily. The cofactor is Zn(2+).

It carries out the reaction 5-(methylsulfanyl)-D-ribulose 1-phosphate = 5-methylsulfanyl-2,3-dioxopentyl phosphate + H2O. It functions in the pathway amino-acid biosynthesis; L-methionine biosynthesis via salvage pathway; L-methionine from S-methyl-5-thio-alpha-D-ribose 1-phosphate: step 2/6. Its function is as follows. Catalyzes the dehydration of methylthioribulose-1-phosphate (MTRu-1-P) into 2,3-diketo-5-methylthiopentyl-1-phosphate (DK-MTP-1-P). In Yersinia pseudotuberculosis serotype IB (strain PB1/+), this protein is Methylthioribulose-1-phosphate dehydratase.